A 108-amino-acid polypeptide reads, in one-letter code: Nucleoid-associated protein HEAR1046 (108 aa).

The interval 86–108 (TSQEKMAGATAGMPMPPGFKMPF) is disordered. Over residues 99–108 (PMPPGFKMPF) the composition is skewed to pro residues.

Belongs to the YbaB/EbfC family. Homodimer.

It is found in the cytoplasm. Its subcellular location is the nucleoid. Its function is as follows. Binds to DNA and alters its conformation. May be involved in regulation of gene expression, nucleoid organization and DNA protection. This is Nucleoid-associated protein HEAR1046 from Herminiimonas arsenicoxydans.